The primary structure comprises 299 residues: Telomere repeat-binding factor 2 (299 aa).

In terms of domain architecture, HTH myb-type spans 1–61; the sequence is MGAPKQKWTP…KWRNISVTAL (61 aa). A DNA-binding region (H-T-H motif) is located at residues 28 to 57; that stretch reads WRTILSDTEFSLILKSRSNVDLKDKWRNIS. Residues 93-116 form a disordered region; it reads LTNDDERAKPTSPGGSGGGSPRTC. In terms of domain architecture, H15 spans 121-189; that stretch reads SITSLDKIIF…KIKHKYRFSS (69 aa). Residues 243-288 adopt a coiled-coil conformation; the sequence is EAAEAAARAVAEAEFAITEAEQAAKEAERAEAEAEAAQIFAKAAMK.

It belongs to the histone H1/H5 family. SMH subfamily. Forms a homodimer and heterodimers with TRB1 or TRB3. Interacts with TRB1 and TRB3. As to expression, ubiquitous.

It localises to the nucleus. The protein resides in the nucleolus. The protein localises to the chromosome. Binds preferentially double-stranded telomeric repeats, but it can also bind to the single G-rich telomeric strand. The chain is Telomere repeat-binding factor 2 (TRB2) from Arabidopsis thaliana (Mouse-ear cress).